We begin with the raw amino-acid sequence, 361 residues long: Phospho-N-acetylmuramoyl-pentapeptide-transferase (361 aa).

The next 10 helical transmembrane spans lie at 28 to 48 (LAII…IKFL), 74 to 94 (TMGG…LADL), 99 to 119 (IWIT…DDYA), 133 to 153 (SKLV…EYLD), 168 to 188 (LNLD…VGSS), 203 to 223 (VPIA…GNLI), 236 to 256 (TGEL…FLWF), 263 to 283 (VFMG…ISVI), 288 to 308 (IVLA…ILQV), and 338 to 358 (KVVI…LSSL).

It belongs to the glycosyltransferase 4 family. MraY subfamily. Mg(2+) serves as cofactor.

It is found in the cell inner membrane. The catalysed reaction is UDP-N-acetyl-alpha-D-muramoyl-L-alanyl-gamma-D-glutamyl-meso-2,6-diaminopimeloyl-D-alanyl-D-alanine + di-trans,octa-cis-undecaprenyl phosphate = di-trans,octa-cis-undecaprenyl diphospho-N-acetyl-alpha-D-muramoyl-L-alanyl-D-glutamyl-meso-2,6-diaminopimeloyl-D-alanyl-D-alanine + UMP. Its pathway is cell wall biogenesis; peptidoglycan biosynthesis. In terms of biological role, catalyzes the initial step of the lipid cycle reactions in the biosynthesis of the cell wall peptidoglycan: transfers peptidoglycan precursor phospho-MurNAc-pentapeptide from UDP-MurNAc-pentapeptide onto the lipid carrier undecaprenyl phosphate, yielding undecaprenyl-pyrophosphoryl-MurNAc-pentapeptide, known as lipid I. The chain is Phospho-N-acetylmuramoyl-pentapeptide-transferase from Rickettsia akari (strain Hartford).